A 182-amino-acid polypeptide reads, in one-letter code: Large ribosomal subunit protein uL5c (182 aa).

It belongs to the universal ribosomal protein uL5 family. As to quaternary structure, part of the 50S ribosomal subunit; contacts the 5S rRNA.

The protein resides in the plastid. It localises to the chloroplast. Its function is as follows. Binds 5S rRNA, forms part of the central protuberance of the 50S subunit. In Cyanidium caldarium (Red alga), this protein is Large ribosomal subunit protein uL5c (rpl5).